A 318-amino-acid polypeptide reads, in one-letter code: Ornithine carbamoyltransferase (318 aa).

Carbamoyl phosphate-binding positions include 63 to 66 (STRT), Gln-90, Arg-114, and 141 to 144 (HPCQ). L-ornithine-binding positions include Asn-172, Asp-235, and 239–240 (SM). Carbamoyl phosphate-binding positions include 275 to 276 (CL) and Arg-303.

Belongs to the aspartate/ornithine carbamoyltransferase superfamily. OTCase family.

The protein resides in the cytoplasm. The catalysed reaction is carbamoyl phosphate + L-ornithine = L-citrulline + phosphate + H(+). It participates in amino-acid biosynthesis; L-arginine biosynthesis; L-arginine from L-ornithine and carbamoyl phosphate: step 1/3. Reversibly catalyzes the transfer of the carbamoyl group from carbamoyl phosphate (CP) to the N(epsilon) atom of ornithine (ORN) to produce L-citrulline. The protein is Ornithine carbamoyltransferase of Parasynechococcus marenigrum (strain WH8102).